Reading from the N-terminus, the 295-residue chain is Cytidine deaminase (295 aa).

2 CMP/dCMP-type deaminase domains span residues 48–168 (EDSD…FGPA) and 187–295 (DDDE…YLSL). 89–91 (NME) contributes to the substrate binding site. H102 lines the Zn(2+) pocket. Catalysis depends on E104, which acts as the Proton donor. Positions 129 and 132 each coordinate Zn(2+).

It belongs to the cytidine and deoxycytidylate deaminase family. As to quaternary structure, homodimer. Zn(2+) serves as cofactor.

It carries out the reaction cytidine + H2O + H(+) = uridine + NH4(+). The catalysed reaction is 2'-deoxycytidine + H2O + H(+) = 2'-deoxyuridine + NH4(+). In terms of biological role, this enzyme scavenges exogenous and endogenous cytidine and 2'-deoxycytidine for UMP synthesis. The sequence is that of Cytidine deaminase from Vibrio cholerae serotype O1 (strain ATCC 39541 / Classical Ogawa 395 / O395).